Here is a 324-residue protein sequence, read N- to C-terminus: NADH-quinone oxidoreductase subunit H (324 aa).

The next 8 helical transmembrane spans lie at 11–31 (ILITVGKAVVILLVVVTCGAF), 81–101 (VIFTLAPMIAFTSMLIAFAIV), 114–134 (IGILFFLMMAGLAVYAVLFAG), 154–174 (VSYEVFIGLSLMGVVAQAGSF), 186–206 (LWNVIPQFFGFITFAIAGVAV), 237–257 (FFVGEYIGIVTVSALMVTLFF), 265–285 (LPPFVWFALKTGFFMMMFILI), and 304–324 (VCLPITLLNLLATAAVILYNA).

It belongs to the complex I subunit 1 family. NDH-1 is composed of 13 different subunits. Subunits NuoA, H, J, K, L, M, N constitute the membrane sector of the complex.

The protein localises to the cell inner membrane. It catalyses the reaction a quinone + NADH + 5 H(+)(in) = a quinol + NAD(+) + 4 H(+)(out). In terms of biological role, NDH-1 shuttles electrons from NADH, via FMN and iron-sulfur (Fe-S) centers, to quinones in the respiratory chain. The immediate electron acceptor for the enzyme in this species is believed to be ubiquinone. Couples the redox reaction to proton translocation (for every two electrons transferred, four hydrogen ions are translocated across the cytoplasmic membrane), and thus conserves the redox energy in a proton gradient. This subunit may bind ubiquinone. The polypeptide is NADH-quinone oxidoreductase subunit H (Pectobacterium atrosepticum (strain SCRI 1043 / ATCC BAA-672) (Erwinia carotovora subsp. atroseptica)).